Consider the following 367-residue polypeptide: Anhydro-N-acetylmuramic acid kinase (367 aa).

An ATP-binding site is contributed by 11–18 (GTSLDGVD).

The protein belongs to the anhydro-N-acetylmuramic acid kinase family.

The catalysed reaction is 1,6-anhydro-N-acetyl-beta-muramate + ATP + H2O = N-acetyl-D-muramate 6-phosphate + ADP + H(+). The protein operates within amino-sugar metabolism; 1,6-anhydro-N-acetylmuramate degradation. It functions in the pathway cell wall biogenesis; peptidoglycan recycling. In terms of biological role, catalyzes the specific phosphorylation of 1,6-anhydro-N-acetylmuramic acid (anhMurNAc) with the simultaneous cleavage of the 1,6-anhydro ring, generating MurNAc-6-P. Is required for the utilization of anhMurNAc either imported from the medium or derived from its own cell wall murein, and thus plays a role in cell wall recycling. In Chromobacterium violaceum (strain ATCC 12472 / DSM 30191 / JCM 1249 / CCUG 213 / NBRC 12614 / NCIMB 9131 / NCTC 9757 / MK), this protein is Anhydro-N-acetylmuramic acid kinase.